Consider the following 486-residue polypeptide: Probable transporter MCH1 (486 aa).

At 1-29 (MPLSKVEHYLSYHTRLLLPHVLSLQSSHR) the chain is on the cytoplasmic side. The helical transmembrane segment at 30-50 (VAYIFSLLSAVSTGFITLISL) threads the bilayer. The Vacuolar portion of the chain corresponds to 51-67 (YSQPWQKHLNYSSWQIN). Residue Asn60 is glycosylated (N-linked (GlcNAc...) asparagine). A helical membrane pass occupies residues 68–88 (TIASMTNLGMYLTPPILGMIA). Residues 89-93 (DSHGP) are Cytoplasmic-facing. Residues 94–114 (ITLSLLAIIGFIPSYSYLAYV) traverse the membrane as a helical segment. Topologically, residues 115–133 (FNHPELSLGGNGDSSFNLS) are vacuolar. Asn131 is a glycosylation site (N-linked (GlcNAc...) asparagine). The helical transmembrane segment at 134–154 (IICFVFIGISTSALYFSALLT) threads the bilayer. At 155–163 (CTKLYPHTK) the chain is on the cytoplasmic side. The helical transmembrane segment at 164–184 (LLSISLPTTCYGISSVVGSQL) threads the bilayer. Residues 185-212 (LRIKWFWSSNASSSSSNSDLNLGRVFQT) lie on the Vacuolar side of the membrane. Asn194 carries N-linked (GlcNAc...) asparagine glycosylation. A helical transmembrane segment spans residues 213–233 (FALVYVVIGLLAWIATSVVSL). Over 234-279 (LHFNEEQDNQKRLDDQTDVEQSPLLERSNHVQEKFTQTMLRIFSDP) the chain is Cytoplasmic. Position 255 is a phosphoserine (Ser255). A helical transmembrane segment spans residues 280–300 (VTYILAVSILLSLGPLEMFIA). Over 301 to 320 (NMGSLTNLLVQLDAPTLSTK) the chain is Vacuolar. The chain crosses the membrane as a helical span at residues 321-343 (LLSTYALSSTFTRLLTGIVADFF). The Cytoplasmic portion of the chain corresponds to 344–347 (AKKK). A helical transmembrane segment spans residues 348–368 (ISIKWILLTFLSLGVCAQLFL). The Vacuolar portion of the chain corresponds to 369–385 (LKMTSSASPWGLVPTGS). The chain crosses the membrane as a helical span at residues 386-406 (LVGIVYGGLFTVYPTLVLLVW). The Cytoplasmic segment spans residues 407-413 (GERSFGT). The chain crosses the membrane as a helical span at residues 414 to 434 (VYGSLLIAPAIGSMIFCMLYA). Residues 435–456 (KFYDSRCMSGGGDLRNPSCISA) are Vacuolar-facing. The chain crosses the membrane as a helical span at residues 457 to 477 (VYKYSSIAFVVSAVLSAVVFW). Topologically, residues 478–486 (KLKSRKLRI) are cytoplasmic.

This sequence belongs to the major facilitator superfamily.

The protein localises to the vacuole membrane. Functionally, probable transporter. Does not act in the transport of monocarboxylic acids across the plasma membrane. The protein is Probable transporter MCH1 (MCH1) of Saccharomyces cerevisiae (strain ATCC 204508 / S288c) (Baker's yeast).